Consider the following 489-residue polypeptide: Protein-export membrane protein SecD (489 aa).

Helical transmembrane passes span 17-37 (VLIV…IPPA), 328-348 (FIQI…AFMV), 356-376 (SIVV…LGIA), 384-404 (LASI…LVVI), 428-448 (LGII…LALM), and 450-470 (LSTL…GVIF).

Belongs to the SecD/SecF family. SecD subfamily. Part of the protein translocation apparatus. Forms a complex with SecF.

It is found in the cell membrane. In terms of biological role, involved in protein export. This Methanolacinia petrolearia (strain DSM 11571 / OCM 486 / SEBR 4847) (Methanoplanus petrolearius) protein is Protein-export membrane protein SecD.